The sequence spans 64 residues: Prokaryotic ubiquitin-like protein Pup (64 aa).

Residues 1-36 (MAQEQTKRGGGGGDDEDVTGTTAAGQERRKKLAQDT) are disordered. Residues 21–58 (TTAAGQERRKKLAQDTDDLLDEIDDVLEENAEDFVRAY) are ARC ATPase binding. Residues 26-52 (QERRKKLAQDTDDLLDEIDDVLEENAE) are a coiled coil. A Deamidated glutamine modification is found at Gln-64. Gln-64 participates in a covalent cross-link: Isoglutamyl lysine isopeptide (Gln-Lys) (interchain with K-? in acceptor proteins).

Belongs to the prokaryotic ubiquitin-like protein family. As to quaternary structure, strongly interacts with the proteasome-associated ATPase ARC through a hydrophobic interface; the interacting region of Pup lies in its C-terminal half. There is one Pup binding site per ARC hexamer ring. Post-translationally, is modified by deamidation of its C-terminal glutamine to glutamate by the deamidase Dop, a prerequisite to the subsequent pupylation process.

It participates in protein degradation; proteasomal Pup-dependent pathway. Its function is as follows. Protein modifier that is covalently attached to lysine residues of substrate proteins, thereby targeting them for proteasomal degradation. The tagging system is termed pupylation. The sequence is that of Prokaryotic ubiquitin-like protein Pup from Mycobacterium ulcerans (strain Agy99).